The chain runs to 345 residues: DNA-directed RNA polymerase subunit alpha (345 aa).

Positions 1 to 241 are alpha N-terminal domain (alpha-NTD); sequence MLRDTHLALQ…DQLGMFINFE (241 aa). The tract at residues 257–345 is alpha C-terminal domain (alpha-CTD); sequence FNPNLLRKVD…ELVKRSDNPF (89 aa).

It belongs to the RNA polymerase alpha chain family. Homodimer. The RNAP catalytic core consists of 2 alpha, 1 beta, 1 beta' and 1 omega subunit. When a sigma factor is associated with the core the holoenzyme is formed, which can initiate transcription.

The enzyme catalyses RNA(n) + a ribonucleoside 5'-triphosphate = RNA(n+1) + diphosphate. DNA-dependent RNA polymerase catalyzes the transcription of DNA into RNA using the four ribonucleoside triphosphates as substrates. In Acidiphilium cryptum (strain JF-5), this protein is DNA-directed RNA polymerase subunit alpha.